The sequence spans 214 residues: Large ribosomal subunit protein uL4c (214 aa).

The interval 42-81 (VKQSNEKRQGSANTKTRSEVRGGGRKPWRQKGTGRARAGS) is disordered. Positions 64–75 (GGRKPWRQKGTG) are enriched in basic residues.

It belongs to the universal ribosomal protein uL4 family. In terms of assembly, part of the 50S ribosomal subunit.

The protein localises to the plastid. The protein resides in the chloroplast. In terms of biological role, probably binds the 23S rRNA. This chain is Large ribosomal subunit protein uL4c (rpl4), found in Pyropia yezoensis (Susabi-nori).